The primary structure comprises 689 residues: Glycine--tRNA ligase beta subunit (689 aa).

The protein belongs to the class-II aminoacyl-tRNA synthetase family. In terms of assembly, tetramer of two alpha and two beta subunits.

It localises to the cytoplasm. The enzyme catalyses tRNA(Gly) + glycine + ATP = glycyl-tRNA(Gly) + AMP + diphosphate. This Klebsiella pneumoniae (strain 342) protein is Glycine--tRNA ligase beta subunit.